The primary structure comprises 357 residues: Peptide chain release factor 1 (357 aa).

Position 232 is an N5-methylglutamine (Gln232).

The protein belongs to the prokaryotic/mitochondrial release factor family. Post-translationally, methylated by PrmC. Methylation increases the termination efficiency of RF1.

The protein localises to the cytoplasm. In terms of biological role, peptide chain release factor 1 directs the termination of translation in response to the peptide chain termination codons UAG and UAA. The sequence is that of Peptide chain release factor 1 from Nitratidesulfovibrio vulgaris (strain ATCC 29579 / DSM 644 / CCUG 34227 / NCIMB 8303 / VKM B-1760 / Hildenborough) (Desulfovibrio vulgaris).